Here is a 557-residue protein sequence, read N- to C-terminus: Arginine--tRNA ligase (557 aa).

A 'HIGH' region motif is present at residues 132 to 142 (ANPTGNLHLGH).

The protein belongs to the class-I aminoacyl-tRNA synthetase family. As to quaternary structure, monomer.

Its subcellular location is the cytoplasm. It carries out the reaction tRNA(Arg) + L-arginine + ATP = L-arginyl-tRNA(Arg) + AMP + diphosphate. The sequence is that of Arginine--tRNA ligase from Geobacillus thermodenitrificans (strain NG80-2).